The chain runs to 61 residues: Small ribosomal subunit protein uS14 (61 aa).

Zn(2+)-binding residues include Cys-24, Cys-27, Cys-40, and Cys-43.

It belongs to the universal ribosomal protein uS14 family. Zinc-binding uS14 subfamily. Part of the 30S ribosomal subunit. Contacts proteins S3 and S10. The cofactor is Zn(2+).

Functionally, binds 16S rRNA, required for the assembly of 30S particles and may also be responsible for determining the conformation of the 16S rRNA at the A site. The polypeptide is Small ribosomal subunit protein uS14 (Ruminiclostridium cellulolyticum (strain ATCC 35319 / DSM 5812 / JCM 6584 / H10) (Clostridium cellulolyticum)).